A 464-amino-acid polypeptide reads, in one-letter code: DNA repair protein KRE29 (464 aa).

The segment at 1-69 (MGSVNSSPNE…SDEEFSSLEN (69 aa)) is disordered. Acidic residues predominate over residues 53–65 (PENDSLNSDEEFS). A phosphoserine mark is found at Ser-81 and Ser-101.

As to quaternary structure, component of the Smc5-Smc6 complex which consists of KRE29, MMS21, NSE1, NSE3, NSE4, NSE5, SMC5 and SMC6. Interacts with NSE5.

It localises to the nucleus. The protein localises to the cytoplasm. In terms of biological role, acts in a DNA repair pathway for removal of UV-induced DNA damage that is distinct from classical nucleotide excision repair and in repair of ionizing radiation damage. Functions in homologous recombination repair of DNA double strand breaks and in recovery of stalled replication forks. The chain is DNA repair protein KRE29 (KRE29) from Saccharomyces cerevisiae (strain ATCC 204508 / S288c) (Baker's yeast).